The primary structure comprises 371 residues: 3-isopropylmalate dehydrogenase (371 aa).

Phosphothreonine is present on T55. 78–89 (GPEWTNPNCRPE) is a binding site for NAD(+). Substrate contacts are provided by R96, R106, R135, and D224. D224, D249, and D253 together coordinate Mg(2+). Residue 290–302 (GSAPDIAGKGIVN) participates in NAD(+) binding.

This sequence belongs to the isocitrate and isopropylmalate dehydrogenases family. Homodimer. It depends on Mg(2+) as a cofactor. The cofactor is Mn(2+).

It is found in the cytoplasm. The catalysed reaction is (2R,3S)-3-isopropylmalate + NAD(+) = 4-methyl-2-oxopentanoate + CO2 + NADH. Its pathway is amino-acid biosynthesis; L-leucine biosynthesis; L-leucine from 3-methyl-2-oxobutanoate: step 3/4. Functionally, catalyzes the oxidation of 3-carboxy-2-hydroxy-4-methylpentanoate (3-isopropylmalate) to 3-carboxy-4-methyl-2-oxopentanoate. The product decarboxylates to 4-methyl-2 oxopentanoate. The polypeptide is 3-isopropylmalate dehydrogenase (leu1) (Schizosaccharomyces pombe (strain 972 / ATCC 24843) (Fission yeast)).